The primary structure comprises 213 residues: Orotate phosphoribosyltransferase (213 aa).

Residue Lys-26 participates in 5-phospho-alpha-D-ribose 1-diphosphate binding. 34–35 serves as a coordination point for orotate; the sequence is FF. 5-phospho-alpha-D-ribose 1-diphosphate-binding positions include 72–73, Arg-99, Lys-100, Lys-103, His-105, and 124–132; these read YK and DDVITAGTA. Orotate is bound by residues Thr-128 and Arg-156.

Belongs to the purine/pyrimidine phosphoribosyltransferase family. PyrE subfamily. Homodimer. The cofactor is Mg(2+).

The enzyme catalyses orotidine 5'-phosphate + diphosphate = orotate + 5-phospho-alpha-D-ribose 1-diphosphate. It participates in pyrimidine metabolism; UMP biosynthesis via de novo pathway; UMP from orotate: step 1/2. In terms of biological role, catalyzes the transfer of a ribosyl phosphate group from 5-phosphoribose 1-diphosphate to orotate, leading to the formation of orotidine monophosphate (OMP). This chain is Orotate phosphoribosyltransferase, found in Pseudomonas savastanoi pv. phaseolicola (strain 1448A / Race 6) (Pseudomonas syringae pv. phaseolicola (strain 1448A / Race 6)).